We begin with the raw amino-acid sequence, 310 residues long: Putative olfactory receptor 7A2 (310 aa).

At 1-26 the chain is on the extracellular side; sequence MVKAGNETQISEFLLLGFSEKQELQP. N6 carries an N-linked (GlcNAc...) asparagine glycan. A helical membrane pass occupies residues 27 to 47; the sequence is FLFGLFLSMYLVTVLGNLLII. The Cytoplasmic segment spans residues 48 to 55; the sequence is LAAISDSC. Residues 56–76 traverse the membrane as a helical segment; the sequence is LHTPMYFFLSNLSFVDICFAS. Residues 77–100 lie on the Extracellular side of the membrane; it reads TMVPKMLVNIQTQSKVITYAGCIT. C98 and C190 are oxidised to a cystine. The helical transmembrane segment at 101–121 threads the bilayer; sequence QMCFFVLFIVLDSLLLTVMAY. The Cytoplasmic segment spans residues 122 to 140; it reads DQFVAICHPLHYTVIMSPQ. A helical transmembrane segment spans residues 141–161; the sequence is LCGLLVLVSWIMSVLNSMLQS. Residues 162–198 lie on the Extracellular side of the membrane; the sequence is LVTLQLSFCTDLEIPHFFCELNEMIHLACSDTFVNNM. Residues 199–218 form a helical membrane-spanning segment; it reads VMHFAAVLLDGGPLVGILYS. Residues 219 to 238 are Cytoplasmic-facing; it reads YCRIVSSIRAISSTQGKYKA. Residues 239 to 259 form a helical membrane-spanning segment; it reads LSTCASHLSVVSIFYGTGLGV. Residues 260–272 are Extracellular-facing; it reads YLSSTMTQNLHST. Residues 273 to 293 form a helical membrane-spanning segment; it reads AVASVMYTVVTPMLNPFIYSL. Over 294–310 the chain is Cytoplasmic; it reads RNKDIKGALTQFFRGKQ.

The protein belongs to the G-protein coupled receptor 1 family.

Its subcellular location is the cell membrane. Functionally, odorant receptor. The protein is Putative olfactory receptor 7A2 (OR7A2P) of Homo sapiens (Human).